Here is a 179-residue protein sequence, read N- to C-terminus: QPLVDLEGNLVENGGTYYLLPHIWALGGGIEAARTGKETCPLTVVQSPFEVSNGEPIRIASQFLSTFIPDGSPYAIGFANPPSCAASPWWTVVETSEGLAVKLLEHKTPEEDDTKFKFQKVSSPNRYVYNLSYCQREDDDLKCDQYIGIRRDAKGYRRLVVTNDNPLELVLVKANSPSQ.

Gln-1 is subject to Pyrrolidone carboxylic acid. 2 disulfide bridges follow: Cys-40–Cys-84 and Cys-134–Cys-143.

Belongs to the protease inhibitor I3 (leguminous Kunitz-type inhibitor) family.

Functionally, inhibition of chymotrypsin. The polypeptide is Chymotrypsin inhibitor ECI (Erythrina variegata (Indian coral tree)).